The primary structure comprises 2643 residues: BAH and coiled-coil domain-containing protein 1 (2643 aa).

Disordered regions lie at residues 23-45 (SAAA…HFQP) and 84-106 (SAAS…RGSH). N6-acetyllysine is present on Lys-220. 2 stretches are compositionally biased toward basic and acidic residues: residues 224-249 (KEKV…DRQK) and 683-702 (ERPD…DGEV). Disordered stretches follow at residues 224–273 (KEKV…SCEG), 674–704 (PATK…EVRQ), 721–758 (GRPD…LESE), 985–1023 (RKPE…PSSA), and 1038–1299 (TLKT…KALP). The segment covering 985–1003 (RKPEDRHMELEEAAQEKTP) has biased composition (basic and acidic residues). The span at 1133 to 1149 (RPEPPRTFLPGEPPPCS) shows a compositional bias: pro residues. A compositionally biased stretch (polar residues) spans 1210–1224 (ATGQTNSTQGGMQNE). Residues 1269–1284 (QEEETQLEESGGDSEV) are compositionally biased toward acidic residues. 2 coiled-coil regions span residues 1346–1373 (ALLS…DVLA) and 1437–1486 (LKAA…SSRS). A compositionally biased stretch (basic and acidic residues) spans 1466-1484 (QRELARLQRRHDHEREESS). Disordered stretches follow at residues 1466–1520 (QREL…DSKK), 1537–1559 (GDEP…QSVS), 1604–1641 (KEAA…GREM), 1746–1781 (RAPG…SRDT), 1875–1896 (FDED…GVQL), 2055–2124 (SSCR…HFLG), 2322–2341 (CPSS…TGVP), and 2349–2386 (SMSS…SDDE). Basic residues predominate over residues 1487–1501 (PARRGPGRPRKRKHS). The segment covering 1631-1641 (PHPDGDSGREM) has biased composition (basic and acidic residues). Residues 1757-1767 (GKKKAKGKVKT) show a composition bias toward basic residues. Residues 1875-1892 (FDEDDTSFSDEEEEEEEA) are compositionally biased toward acidic residues. The span at 2349–2374 (SMSSSSSGSSTSSSSGSVSTSSLCSS) shows a compositional bias: low complexity. Residues 2375–2386 (DNEDSSYSSDDE) are compositionally biased toward acidic residues. A BAH domain is found at 2517–2637 (ETLRIGDCAV…PTTGRLVTAD (121 aa)).

This is BAH and coiled-coil domain-containing protein 1 (Bahcc1) from Mus musculus (Mouse).